Consider the following 68-residue polypeptide: MVYYPELFVWVSQEPFPNKDMEGRLPKGRLPVPKEVNRKKNDETNAASLTPLGSSELRSPRISYLHFF.

The interval 22–54 (EGRLPKGRLPVPKEVNRKKNDETNAASLTPLGS) is disordered. Residues 44 to 54 (TNAASLTPLGS) are compositionally biased toward polar residues. S59 bears the Phosphoserine mark.

In terms of assembly, interacts with the latency-associated peptides (LAP) of TGFB1 and TGFB2; the interaction results in a decrease in TGFB autoinduction. Interacts with FLNA. Phosphorylated on Ser-59. Phosphorylation decreases stability and activity. In terms of tissue distribution, expressed in lung (at protein level).

It localises to the cytoplasm. May have roles in neural function. Ectopic expression augments motility of gliomas. Also promotes axonal regeneration. May also have functions in cellular differentiation. Induces differentiation of fibroblast into myofibroblast and myofibroblast ameboid migration. Increases retinoic-acid regulation of lipid-droplet biogenesis. Down-regulates the expression of TGFB1 and TGFB2 but not of TGFB3. May play a role in the regulation of alveolar generation. In Homo sapiens (Human), this protein is Neuronal regeneration-related protein (NREP).